A 219-amino-acid chain; its full sequence is Ribose-5-phosphate isomerase A (219 aa).

Residues 28-31, 81-84, and 94-97 each bind substrate; these read TGST, DGAD, and KGGG. Glutamate 103 (proton acceptor) is an active-site residue. Lysine 121 lines the substrate pocket.

This sequence belongs to the ribose 5-phosphate isomerase family. In terms of assembly, homodimer.

It carries out the reaction aldehydo-D-ribose 5-phosphate = D-ribulose 5-phosphate. It functions in the pathway carbohydrate degradation; pentose phosphate pathway; D-ribose 5-phosphate from D-ribulose 5-phosphate (non-oxidative stage): step 1/1. In terms of biological role, catalyzes the reversible conversion of ribose-5-phosphate to ribulose 5-phosphate. This Erwinia tasmaniensis (strain DSM 17950 / CFBP 7177 / CIP 109463 / NCPPB 4357 / Et1/99) protein is Ribose-5-phosphate isomerase A.